The following is a 358-amino-acid chain: MAATSAQHIGLQGHGTSRNDRDRRLVRYWLYAVFAVLIAIVMVGGATRMTGSGLSITEWKPIHGVIPPLNHAEWVEEFEKYQQIPQYQQINKGMSLAEFQYIFWWEWAHRLLARFVGFLVAVPLGFFWLTGRLKGGLKYRMLGLLALGGLQGAIGWWMVASGLSELTSVSQYRLAIHLTTACVIITAVFYIARGLVTYSERPAERSIQRFAGWIVFAVLVQIYLGGLVAGLHAGLTYNTWPLIDGAIIPSDLFTQAPWWRNLFENPKTVQFVHRMFAYTVLLLAILHAVQVWKNAPGTTHARRTIVLVGLVFIQAMIGIATLLMSAPLHLGLTHQFFALVVLAFAVAHWRATKGAYAA.

A run of 8 helical transmembrane segments spans residues 25–45 (LVRY…MVGG), 111–131 (LLAR…WLTG), 141–161 (MLGL…MVAS), 176–196 (IHLT…RGLV), 210–230 (FAGW…LVAG), 269–289 (VQFV…LHAV), 304–324 (TIVL…TLLM), and 326–346 (APLH…AFAV). Residue histidine 273 coordinates heme. Heme is bound at residue histidine 334.

The protein belongs to the COX15/CtaA family. Type 2 subfamily. In terms of assembly, interacts with CtaB. It depends on heme b as a cofactor.

It is found in the cell membrane. The enzyme catalyses Fe(II)-heme o + 2 A + H2O = Fe(II)-heme a + 2 AH2. The protein operates within porphyrin-containing compound metabolism; heme A biosynthesis; heme A from heme O: step 1/1. Functionally, catalyzes the conversion of heme O to heme A by two successive hydroxylations of the methyl group at C8. The first hydroxylation forms heme I, the second hydroxylation results in an unstable dihydroxymethyl group, which spontaneously dehydrates, resulting in the formyl group of heme A. The polypeptide is Heme A synthase (Brucella suis (strain ATCC 23445 / NCTC 10510)).